The chain runs to 972 residues: Translation initiation factor IF-2 (972 aa).

Positions 48-63 (DHLRKSHGATDGDKRK) are enriched in basic and acidic residues. Disordered regions lie at residues 48 to 85 (DHLRKSHGATDGDKRKITLTRKHTSEIKQSDATGKART) and 99 to 385 (RDDV…QAPT). Positions 105 to 114 (GAEQGQAQVA) are enriched in low complexity. A compositionally biased stretch (basic and acidic residues) spans 121 to 181 (ELKRREEEAR…EEEAAAKRVA (61 aa)). Positions 182 to 205 (AEAAAAQQQAAAQQAAAAEQQEAA) are enriched in low complexity. Basic and acidic residues predominate over residues 212–263 (DEARAAAERAAQREAAKKAEDAAREAADKARAEQEEISKRRAAAEAEARAIR). A compositionally biased stretch (pro residues) spans 279–288 (PPKPVEPPKP). Residues 313 to 328 (PAGAAAPATTAPAGAG) show a composition bias toward low complexity. Residues 357–370 (SSGGVDRGWRGGPK) are compositionally biased toward gly residues. The region spanning 472–641 (PRPPVVTVMG…LLQAEVLELK (170 aa)) is the tr-type G domain. Positions 481–488 (GHVDHGKT) are G1. 481–488 (GHVDHGKT) contacts GTP. The tract at residues 506–510 (GITQH) is G2. The interval 527–530 (DTPG) is G3. GTP is bound by residues 527–531 (DTPGH) and 581–584 (NKID). The G4 stretch occupies residues 581–584 (NKID). The tract at residues 617-619 (SAK) is G5.

The protein belongs to the TRAFAC class translation factor GTPase superfamily. Classic translation factor GTPase family. IF-2 subfamily.

Its subcellular location is the cytoplasm. In terms of biological role, one of the essential components for the initiation of protein synthesis. Protects formylmethionyl-tRNA from spontaneous hydrolysis and promotes its binding to the 30S ribosomal subunits. Also involved in the hydrolysis of GTP during the formation of the 70S ribosomal complex. The protein is Translation initiation factor IF-2 of Burkholderia lata (strain ATCC 17760 / DSM 23089 / LMG 22485 / NCIMB 9086 / R18194 / 383).